Reading from the N-terminus, the 109-residue chain is Putative ankyrin repeat protein L482 (109 aa).

ANK repeat units lie at residues Tyr-1–Thr-26, Asn-27–Ser-56, Glu-57–Ser-86, and Asn-88–Ala-109.

The polypeptide is Putative ankyrin repeat protein L482 (Acanthamoeba polyphaga (Amoeba)).